We begin with the raw amino-acid sequence, 457 residues long: MKIHFVGIGGIGMSAVALHEFLNGNDVYGSNIEETERTAYLRKLGIPIFVPHSADNWYDPDLVIKTPAVRDDNPEIVRARMERVPIENRLHYFRDILKREKKEEFAVTGTDGKTTTTAMVAHVLKHLKKSPTVFLGGIMDSLEHGNYEKGNGPVVYELDESEEFFSEFSPNYLIITNARGDHLENYGNSLSRYRSAFEKISRNTDLVVTFAEDELTSHLGDVTFGVKKGTYTLEMRSASRAEQKAVVEKNGKRYLELKLKVPGFHNVLNALAVIALFDSLGYDLAPVLEALEEFRGVHRRFSIAFHDPETNIYVIDDYAHTPDEIRNLLQTAKEVFENEKIVVIFQPHRYSRLEREDGNFAKALQLADEVVVTEVYDAFEEKKNGVSGKMIWDSLKSLGKEAYFVEKLPELEKVIPVSENTVFLFVGAGDIIYSSRRFVERYQSSKSSPSRVLGSNK.

Residue 109–115 (GTDGKTT) coordinates ATP.

This sequence belongs to the MurCDEF family.

Its subcellular location is the cytoplasm. It catalyses the reaction UDP-N-acetyl-alpha-D-muramate + L-alanine + ATP = UDP-N-acetyl-alpha-D-muramoyl-L-alanine + ADP + phosphate + H(+). It participates in cell wall biogenesis; peptidoglycan biosynthesis. Functionally, cell wall formation. In Thermotoga sp. (strain RQ2), this protein is UDP-N-acetylmuramate--L-alanine ligase.